Consider the following 131-residue polypeptide: Putative pre-16S rRNA nuclease (131 aa).

It belongs to the YqgF nuclease family.

It localises to the cytoplasm. Functionally, could be a nuclease involved in processing of the 5'-end of pre-16S rRNA. The sequence is that of Putative pre-16S rRNA nuclease from Bordetella avium (strain 197N).